Reading from the N-terminus, the 247-residue chain is Enolase-phosphatase E1 (247 aa).

The Mg(2+) site is built by Asp-12 and Glu-14. Substrate-binding positions include 141-142 and Lys-175; that span reads SS. Residue Asp-200 coordinates Mg(2+).

Belongs to the HAD-like hydrolase superfamily. MasA/MtnC family. In terms of assembly, monomer. Mg(2+) serves as cofactor.

The protein resides in the cytoplasm. It localises to the nucleus. It carries out the reaction 5-methylsulfanyl-2,3-dioxopentyl phosphate + H2O = 1,2-dihydroxy-5-(methylsulfanyl)pent-1-en-3-one + phosphate. It functions in the pathway amino-acid biosynthesis; L-methionine biosynthesis via salvage pathway; L-methionine from S-methyl-5-thio-alpha-D-ribose 1-phosphate: step 3/6. It participates in amino-acid biosynthesis; L-methionine biosynthesis via salvage pathway; L-methionine from S-methyl-5-thio-alpha-D-ribose 1-phosphate: step 4/6. Bifunctional enzyme that catalyzes the enolization of 2,3-diketo-5-methylthiopentyl-1-phosphate (DK-MTP-1-P) into the intermediate 2-hydroxy-3-keto-5-methylthiopentenyl-1-phosphate (HK-MTPenyl-1-P), which is then dephosphorylated to form the acireductone 1,2-dihydroxy-3-keto-5-methylthiopentene (DHK-MTPene). This Drosophila willistoni (Fruit fly) protein is Enolase-phosphatase E1.